We begin with the raw amino-acid sequence, 103 residues long: Large ribosomal subunit protein bL21 (103 aa).

It belongs to the bacterial ribosomal protein bL21 family. In terms of assembly, part of the 50S ribosomal subunit. Contacts protein L20.

This protein binds to 23S rRNA in the presence of protein L20. The sequence is that of Large ribosomal subunit protein bL21 from Haemophilus influenzae (strain ATCC 51907 / DSM 11121 / KW20 / Rd).